We begin with the raw amino-acid sequence, 160 residues long: RNA pyrophosphohydrolase (160 aa).

Residues 10 to 154 (PYRPCVGVML…KRDVYVAVLD (145 aa)) form the Nudix hydrolase domain. The Nudix box motif lies at 44–65 (GGVEKGEDPRAAALRELWEETG).

It belongs to the Nudix hydrolase family. RppH subfamily. Requires a divalent metal cation as cofactor.

In terms of biological role, accelerates the degradation of transcripts by removing pyrophosphate from the 5'-end of triphosphorylated RNA, leading to a more labile monophosphorylated state that can stimulate subsequent ribonuclease cleavage. This Roseobacter denitrificans (strain ATCC 33942 / OCh 114) (Erythrobacter sp. (strain OCh 114)) protein is RNA pyrophosphohydrolase.